We begin with the raw amino-acid sequence, 329 residues long: Prostaglandin reductase 1 (329 aa).

T18 carries the post-translational modification Phosphothreonine. NADP(+) contacts are provided by residues G152 to G155, K178, Y193, N217, C239 to Y245, F270 to V272, and N321. The residue at position 178 (K178) is an N6-(2-hydroxyisobutyryl)lysine; alternate. The residue at position 178 (K178) is an N6-acetyllysine; alternate.

This sequence belongs to the NADP-dependent oxidoreductase L4BD family. As to quaternary structure, monomer or homodimer.

The protein resides in the cytoplasm. The enzyme catalyses 13,14-dihydro-15-oxo-prostaglandin E1 + NADP(+) = 15-oxoprostaglandin E1 + NADPH + H(+). The catalysed reaction is 13,14-dihydro-15-oxo-prostaglandin E2 + NADP(+) = 15-oxoprostaglandin E2 + NADPH + H(+). It catalyses the reaction 13,14-dihydro-15-oxo-prostaglandin F1alpha + NADP(+) = 15-oxoprostaglandin F1alpha + NADPH + H(+). It carries out the reaction 13,14-dihydro-15-oxo-PGF2alpha + NADP(+) = 15-oxoprostaglandin F2alpha + NADPH + H(+). The enzyme catalyses leukotriene B4 + NADP(+) = 12-oxo-leukotriene B4 + NADPH + H(+). The catalysed reaction is 20-hydroxy-leukotriene B4 + NADP(+) = 12-oxo-20-hydroxy-leukotriene B4 + NADPH + H(+). It catalyses the reaction 6-trans-leukotriene B4 + NADP(+) = 12-oxo-(5S)-hydroxy-(6E,8E,10E,14Z)-eicosatetraenoate + NADPH + H(+). It carries out the reaction (5S,12S)-dihydroxy-(6E,10E,12E,14Z)-eicosatetraenoate + NADP(+) = 12-oxo-(5S)-hydroxy-(6E,8E,10E,14Z)-eicosatetraenoate + NADPH + H(+). The enzyme catalyses an n-alkanal + NADP(+) = an alk-2-enal + NADPH + H(+). The catalysed reaction is hexanal + NADP(+) = (E)-hex-2-enal + NADPH + H(+). It catalyses the reaction octanal + NADP(+) = (2E)-octenal + NADPH + H(+). It carries out the reaction decanal + NADP(+) = (2E)-decenal + NADPH + H(+). The enzyme catalyses dodecanal + NADP(+) = (2E)-dodecenal + NADPH + H(+). The catalysed reaction is 4-hydroxynonanal + NADP(+) = (E)-4-hydroxynon-2-enal + NADPH + H(+). It catalyses the reaction pentan-2-one + NADP(+) = (E)-pent-3-en-2-one + NADPH + H(+). It carries out the reaction nonan-2-one + NADP(+) = (3E)-nonen-2-one + NADPH + H(+). Its function is as follows. NAD(P)H-dependent oxidoreductase involved in metabolic inactivation of pro- and anti-inflammatory eicosanoids: prostaglandins (PG), leukotrienes (LT) and lipoxins (LX). Catalyzes with high efficiency the reduction of the 13,14 double bond of 15-oxoPGs, including 15-oxo-PGE1, 15-oxo-PGE2, 15-oxo-PGF1-alpha and 15-oxo-PGF2-alpha. Catalyzes with lower efficiency the oxidation of the hydroxyl group at C12 of LTB4 and its derivatives, converting them into biologically less active 12-oxo-LTB4 metabolites. Reduces 15-oxo-LXA4 to 13,14 dihydro-15-oxo-LXA4, enhancing neutrophil recruitment at the inflammatory site. Plays a role in metabolic detoxification of alkenals and ketones. Reduces alpha,beta-unsaturated alkenals and ketones, particularly those with medium-chain length, showing highest affinity toward (2E)-decenal and (3E)-3-nonen-2-one. May inactivate 4-hydroxy-2-nonenal, a cytotoxic lipid constituent of oxidized low-density lipoprotein particles. This is Prostaglandin reductase 1 (Ptgr1) from Mus musculus (Mouse).